Consider the following 334-residue polypeptide: N-acetyl-gamma-glutamyl-phosphate reductase (334 aa).

Residue Cys154 is part of the active site.

It belongs to the NAGSA dehydrogenase family. Type 1 subfamily.

It is found in the cytoplasm. It catalyses the reaction N-acetyl-L-glutamate 5-semialdehyde + phosphate + NADP(+) = N-acetyl-L-glutamyl 5-phosphate + NADPH + H(+). The protein operates within amino-acid biosynthesis; L-arginine biosynthesis; N(2)-acetyl-L-ornithine from L-glutamate: step 3/4. Its function is as follows. Catalyzes the NADPH-dependent reduction of N-acetyl-5-glutamyl phosphate to yield N-acetyl-L-glutamate 5-semialdehyde. The sequence is that of N-acetyl-gamma-glutamyl-phosphate reductase from Photorhabdus laumondii subsp. laumondii (strain DSM 15139 / CIP 105565 / TT01) (Photorhabdus luminescens subsp. laumondii).